We begin with the raw amino-acid sequence, 288 residues long: Phenazine biosynthesis-like domain-containing protein (288 aa).

Glu46 is a catalytic residue.

It belongs to the PhzF family. As to quaternary structure, interacts with UNRIP/MAWD.

The protein is Phenazine biosynthesis-like domain-containing protein (PBLD) of Homo sapiens (Human).